A 143-amino-acid chain; its full sequence is MTPVRRRKLFILLFALSVLSAAAALVLYALRQNISLFYTPTQIVAGEAPAKHHIRVGGMVEANSIVRAKKGLAVQFKITDFENTIVVTYSGILPDLFREGQGIVAEGEVTDNHHFHATQVLAKHDANYMPPQVKSALADKVKQ.

The Cytoplasmic segment spans residues 1 to 8; that stretch reads MTPVRRRK. Residues 9–29 form a helical; Signal-anchor for type II membrane protein membrane-spanning segment; that stretch reads LFILLFALSVLSAAAALVLYA. Topologically, residues 30–143 are periplasmic; that stretch reads LRQNISLFYT…KSALADKVKQ (114 aa). The heme site is built by His124 and Tyr128.

It belongs to the CcmE/CycJ family.

It localises to the cell inner membrane. Functionally, heme chaperone required for the biogenesis of c-type cytochromes. Transiently binds heme delivered by CcmC and transfers the heme to apo-cytochromes in a process facilitated by CcmF and CcmH. This Legionella pneumophila (strain Lens) protein is Cytochrome c-type biogenesis protein CcmE.